A 687-amino-acid chain; its full sequence is Sphingoid long chain base kinase 5 (687 aa).

The tract at residues 1 to 20 (MTLKPSKRRKGRSRHSRKKQ) is disordered. S-palmitoyl cysteine; by AKR1 attachment occurs at residues Cys91 and Cys94. Residues 101 to 116 (IDRSETSTTDTSKDDL) are compositionally biased toward basic and acidic residues. Disordered stretches follow at residues 101-130 (IDRS…VNGQ) and 180-207 (DELE…SLLT). Residues 193 to 207 (NSLSRGSNSSSSLLT) are compositionally biased toward low complexity. Positions 266–405 (RRNKSIFVII…IDLMCCSQPS (140 aa)) constitute a DAGKc domain. ATP is bound by residues 276–278 (NPF) and Thr308. 333–336 (SGDG) provides a ligand contact to substrate. Asp335 (proton donor/acceptor) is an active-site residue. ATP contacts are provided by residues Glu340, 366–368 (GSG), Arg434, and Arg440. Residues 506–524 (EYETENEDEDEDADADDED) are compositionally biased toward acidic residues. Residues 506–525 (EYETENEDEDEDADADDEDS) form a disordered region. 652–654 (DGE) is a binding site for ATP.

It localises to the golgi apparatus membrane. The enzyme catalyses (4R)-hydroxysphinganine + ATP = (4R)-hydroxysphinganine 1-phosphate + ADP + H(+). It catalyses the reaction a sphingoid base + ATP = a sphingoid 1-phosphate + ADP + H(+). It carries out the reaction sphinganine + ATP = sphinganine 1-phosphate + ADP + H(+). Catalyzes the phosphorylation of the sphingoid long chain bases dihydrosphingosine (DHS or sphinganine) and phytosphingosine (PHS) to form dihydrosphingosine 1-phosphate (DHS-1P) and phytosphingosine 1-phosphate (PHS-1P) respectively. Redundant to LCB4, is only responsible for few percent of the total activity. Involved in the biosynthesis of sphingolipids and ceramides. Involved in heat-induced transient cell cycle arrest. Accumulation of phosphorylated sphingoid long chain bases (LCBPs) stimulates calcium influx and activates calcineurin signaling. Involved in heat-stress resistance. The sequence is that of Sphingoid long chain base kinase 5 (LCB5) from Saccharomyces cerevisiae (strain ATCC 204508 / S288c) (Baker's yeast).